A 265-amino-acid chain; its full sequence is Undecaprenyl-diphosphatase (265 aa).

Transmembrane regions (helical) follow at residues 18 to 38, 41 to 61, 69 to 89, 95 to 115, 133 to 153, 171 to 191, 210 to 230, and 245 to 265; these read FLPV…GIAH, FTKL…VVLY, LDFY…GLLL, GLLE…LILL, ITYL…IPGV, TTAA…ATVK, ILII…KTFI, and RIIA…LTII.

Belongs to the UppP family.

It is found in the cell inner membrane. The enzyme catalyses di-trans,octa-cis-undecaprenyl diphosphate + H2O = di-trans,octa-cis-undecaprenyl phosphate + phosphate + H(+). Its function is as follows. Catalyzes the dephosphorylation of undecaprenyl diphosphate (UPP). Confers resistance to bacitracin. This is Undecaprenyl-diphosphatase (uppP) from Flavobacterium johnsoniae (strain ATCC 17061 / DSM 2064 / JCM 8514 / BCRC 14874 / CCUG 350202 / NBRC 14942 / NCIMB 11054 / UW101) (Cytophaga johnsonae).